We begin with the raw amino-acid sequence, 340 residues long: Deubiquitinase SseL (340 aa).

H223 is an active-site residue. C285 acts as the Nucleophile in catalysis.

It belongs to the peptidase C79 family.

It is found in the secreted. It localises to the host cytoplasm. In terms of biological role, effector proteins function to alter host cell physiology and promote bacterial survival in host tissues. This protease targets the host cell ubiquitin pathway by acting as a deubiquitinase in infected host cells. Specifically hydrolyzes mono- and polyubiquitin substrates in vitro with a preference for 'Lys-63'-linked ubiquitin chains, suggesting that it interferes with a signaling pathway rather than inhibiting proteasomal-dependent degradation of its targets. Does not possess desumoylating activity. Is required for the Salmonella-induced delayed cytotoxicity in macrophages and full virulence. Is not required for intracellular bacterial replication. The sequence is that of Deubiquitinase SseL (sseL) from Salmonella typhimurium (strain LT2 / SGSC1412 / ATCC 700720).